Here is a 300-residue protein sequence, read N- to C-terminus: Cation-efflux pump FieF (300 aa).

The helical transmembrane segment at Leu-24–Val-44 threads the bilayer. Zn(2+)-binding residues include Asp-45 and Asp-49. 2 helical membrane passes run Ala-82–Ile-102 and Ala-114–Phe-134. His-153 and Asp-157 together coordinate Zn(2+). Helical transmembrane passes span Ser-156–His-176 and Ala-178–Gly-198.

The protein belongs to the cation diffusion facilitator (CDF) transporter (TC 2.A.4) family. FieF subfamily. In terms of assembly, homodimer.

It is found in the cell inner membrane. It carries out the reaction Zn(2+)(in) + H(+)(out) = Zn(2+)(out) + H(+)(in). The catalysed reaction is Cd(2+)(in) + H(+)(out) = Cd(2+)(out) + H(+)(in). It catalyses the reaction Fe(2+)(in) + H(+)(out) = Fe(2+)(out) + H(+)(in). Its function is as follows. Divalent metal cation transporter which exports Zn(2+), Cd(2+) and possibly Fe(2+). May be involved in zinc and iron detoxification by efflux. This Klebsiella pneumoniae subsp. pneumoniae (strain ATCC 700721 / MGH 78578) protein is Cation-efflux pump FieF.